The chain runs to 105 residues: Protein AlbB (105 aa).

Involved in the biosynthesis of albonoursin (cyclo[(alpha,beta-dehydro-Phe)-(alpha,beta-dehydro-Leu)]), an antibacterial peptide. AlbB is essential for cyclic dipeptide oxidase AlbA (CDO) activity. This is Protein AlbB (albB) from Streptomyces noursei (Streptomyces albulus).